We begin with the raw amino-acid sequence, 906 residues long: UPF0182 protein CA_C0010 (906 aa).

The next 7 helical transmembrane spans lie at 7–29, 47–69, 96–118, 153–175, 208–230, 250–272, and 279–301; these read IVTI…DFII, LAAI…WFYY, VAIV…VYWY, LYGV…YIVL, FAII…SFNL, LVFY…TSII, and IFVS…EIVQ. The segment covering 842–862 has biased composition (low complexity); the sequence is NSSNNQSETRTETGGTSTDSS. A disordered region spans residues 842–875; the sequence is NSSNNQSETRTETGGTSTDSSNNKDKLKQAQDLY.

This sequence belongs to the UPF0182 family.

The protein localises to the cell membrane. The protein is UPF0182 protein CA_C0010 of Clostridium acetobutylicum (strain ATCC 824 / DSM 792 / JCM 1419 / IAM 19013 / LMG 5710 / NBRC 13948 / NRRL B-527 / VKM B-1787 / 2291 / W).